Reading from the N-terminus, the 330-residue chain is Ketol-acid reductoisomerase (NADP(+)) (330 aa).

The 181-residue stretch at 1–181 (MKVFYDSDFK…GLSRAGVIQT (181 aa)) folds into the KARI N-terminal Rossmann domain. Residues 24–27 (YGSQ), arginine 47, serine 52, and 82–85 (DELQ) contribute to the NADP(+) site. The active site involves histidine 107. An NADP(+)-binding site is contributed by glycine 133. The KARI C-terminal knotted domain maps to 182–327 (TFKEETETDL…AKLRKMCGLE (146 aa)). Residues aspartate 190, glutamate 194, glutamate 226, and glutamate 230 each coordinate Mg(2+). Serine 251 provides a ligand contact to substrate.

Belongs to the ketol-acid reductoisomerase family. Mg(2+) is required as a cofactor.

The enzyme catalyses (2R)-2,3-dihydroxy-3-methylbutanoate + NADP(+) = (2S)-2-acetolactate + NADPH + H(+). It carries out the reaction (2R,3R)-2,3-dihydroxy-3-methylpentanoate + NADP(+) = (S)-2-ethyl-2-hydroxy-3-oxobutanoate + NADPH + H(+). The protein operates within amino-acid biosynthesis; L-isoleucine biosynthesis; L-isoleucine from 2-oxobutanoate: step 2/4. Its pathway is amino-acid biosynthesis; L-valine biosynthesis; L-valine from pyruvate: step 2/4. Its function is as follows. Involved in the biosynthesis of branched-chain amino acids (BCAA). Catalyzes an alkyl-migration followed by a ketol-acid reduction of (S)-2-acetolactate (S2AL) to yield (R)-2,3-dihydroxy-isovalerate. In the isomerase reaction, S2AL is rearranged via a Mg-dependent methyl migration to produce 3-hydroxy-3-methyl-2-ketobutyrate (HMKB). In the reductase reaction, this 2-ketoacid undergoes a metal-dependent reduction by NADPH to yield (R)-2,3-dihydroxy-isovalerate. This Methanococcus maripaludis (strain C7 / ATCC BAA-1331) protein is Ketol-acid reductoisomerase (NADP(+)).